A 1304-amino-acid chain; its full sequence is Angiotensin-converting enzyme (1304 aa).

A signal peptide spans 1–27 (MGAASGRRGPGLLLPLLLLLPPQPALA). At 28–1257 (LDPGLQPGNF…LDAQQARVGQ (1230 aa)) the chain is on the extracellular side. 6 N-linked (GlcNAc...) asparagine glycosylation sites follow: N36, N52, N72, N109, N144, and N158. Peptidase M2 domains follow at residues 38 to 622 (SADE…LGWP) and 641 to 1220 (VTDE…LGWP). C155 and C163 are joined by a disulfide. Y229 lines the chloride pocket. Residue N316 is glycosylated (N-linked (GlcNAc...) asparagine). An intrachain disulfide couples C357 to C375. H388 is a Zn(2+) binding site. E389 serves as the catalytic Proton acceptor 1. Zn(2+)-binding residues include H392 and E416. N-linked (GlcNAc...) asparagine glycosylation is found at N440, N443, and N507. The active-site Proton donor 1 is H518. Position 527 (R527) interacts with chloride. Residues C543 and C555 are joined by a disulfide bond. Residue N675 is glycosylated (N-linked (GlcNAc...) asparagine). N693 and N712 each carry an N-linked (GlcNAc...) (complex) asparagine glycan. Residues C755 and C761 are joined by a disulfide bond. N758 carries an N-linked (GlcNAc...) asparagine glycan. Residues R789 and Y827 each coordinate chloride. An N-linked (GlcNAc...) asparagine glycan is attached at N940. Residues C955 and C973 are joined by a disulfide bond. H986 lines the Zn(2+) pocket. Catalysis depends on E987, which acts as the Proton acceptor 2. Zn(2+) is bound by residues H990 and E1014. Chloride is bound by residues W1088 and R1092. H1116 functions as the Proton donor 2 in the catalytic mechanism. R1125 serves as a coordination point for chloride. C1141 and C1153 are oxidised to a cystine. N-linked (GlcNAc...) asparagine glycosylation occurs at N1189. Residues 1213–1254 (HGEKLGWPQYNWTPNSARSEGPLPDSGRVSFLGLDLDAQQAR) form a juxtamembrane stalk region. The chain crosses the membrane as a helical span at residues 1258–1274 (WLLLFLGIALLVATLGL). At 1275 to 1304 (SQRLFSIRHRSLHRHSHGPQFDSEVELRHS) the chain is on the cytoplasmic side. Phosphoserine is present on S1297.

It belongs to the peptidase M2 family. Monomer and homodimer; homodimerizes following binding to an inhibitor. Interacts with calmodulin (CALM1, CALM2 or CALM3); interaction takes place in the cytoplasmic region and regulates phosphorylation and proteolytic cleavage. Requires Zn(2+) as cofactor. The cofactor is chloride. Produced following proteolytic cleavage by secretase enzymes that cleave the transmembrane form in the juxtamembrane stalk region upstream of the transmembrane region. Cleavage can take place at different sites of the juxtamembrane stalk region. Post-translationally, phosphorylated by CK2 on Ser-1297; which allows membrane retention. Phosphorylated on tyrosine residues on its extracellular part, promoting cleavage by secretase enzymes and formation of the soluble form (Angiotensin-converting enzyme, soluble form).

Its subcellular location is the cell membrane. The protein localises to the cytoplasm. It is found in the secreted. It carries out the reaction Release of a C-terminal dipeptide, oligopeptide-|-Xaa-Yaa, when Xaa is not Pro, and Yaa is neither Asp nor Glu. Thus, conversion of angiotensin I to angiotensin II, with increase in vasoconstrictor activity, but no action on angiotensin II.. The catalysed reaction is angiotensin I + H2O = L-histidyl-L-leucine + angiotensin II. It catalyses the reaction bradykinin + H2O = L-Phe-L-Arg + bradykinin(1-7). The enzyme catalyses substance P + H2O = substance P(1-9) + L-Leu-L-Met-NH2. It carries out the reaction substance P + H2O = substance P(1-8) + Gly-L-Leu-L-Met-NH2. The catalysed reaction is substance P + H2O = L-Phe-L-Phe-Gly-L-Leu-L-Met-NH2 + substance P(1-6). It catalyses the reaction neurotensin + H2O = neurotensin(1-11) + L-isoleucyl-L-leucine. The enzyme catalyses goralatide + H2O = N-acetyl-L-seryl-L-aspartate + L-lysyl-L-proline. It carries out the reaction Met-enkephalin + H2O = L-phenylalanyl-L-methionine + L-tyrosylglycylglycine. The catalysed reaction is Leu-enkephalin + H2O = L-tyrosylglycylglycine + L-phenylalanyl-L-leucine. It catalyses the reaction Met-enkephalin-Arg-Phe + H2O = L-arginyl-L-phenylalanine + Met-enkephalin. Its activity is regulated as follows. The dipeptidyl carboxypeptidase activity is strongly activated by chloride. The dipeptidyl carboxypeptidase activity is specifically inhibited by lisinopril, captopril and enalaprilat. Strongly inhibited by lisinopril and captopril. Dipeptidyl carboxypeptidase that removes dipeptides from the C-terminus of a variety of circulating hormones, such as angiotensin I, bradykinin or enkephalins, thereby playing a key role in the regulation of blood pressure, electrolyte homeostasis or synaptic plasticity. Composed of two similar catalytic domains, each possessing a functional active site, with different selectivity for substrates. Plays a major role in the angiotensin-renin system that regulates blood pressure and sodium retention by the kidney by converting angiotensin I to angiotensin II, resulting in an increase of the vasoconstrictor activity of angiotensin. Also able to inactivate bradykinin, a potent vasodilator, and therefore enhance the blood pressure response. Acts as a regulator of synaptic transmission by mediating cleavage of neuropeptide hormones, such as substance P, neurotensin or enkephalins. Catalyzes degradation of different enkephalin neuropeptides (Met-enkephalin, Leu-enkephalin, Met-enkephalin-Arg-Phe and possibly Met-enkephalin-Arg-Gly-Leu). Acts as a regulator of synaptic plasticity in the nucleus accumbens of the brain by mediating cleavage of Met-enkephalin-Arg-Phe, a strong ligand of Mu-type opioid receptor OPRM1, into Met-enkephalin. Met-enkephalin-Arg-Phe cleavage by ACE decreases activation of OPRM1, leading to long-term synaptic potentiation of glutamate release. Also acts as a regulator of hematopoietic stem cell differentiation by mediating degradation of hemoregulatory peptide N-acetyl-SDKP (AcSDKP). Acts as a regulator of cannabinoid signaling pathway by mediating degradation of hemopressin, an antagonist peptide of the cannabinoid receptor CNR1. Involved in amyloid-beta metabolism by catalyzing degradation of Amyloid-beta protein 40 and Amyloid-beta protein 42 peptides, thereby preventing plaque formation. Catalyzes cleavage of cholecystokinin (maturation of Cholecystokinin-8 and Cholecystokinin-5) and Gonadoliberin-1 (both maturation and degradation) hormones. Degradation of hemoregulatory peptide N-acetyl-SDKP (AcSDKP) and amyloid-beta proteins is mediated by the N-terminal catalytic domain, while angiotensin I and cholecystokinin cleavage is mediated by the C-terminal catalytic region. Functionally, soluble form that is released in blood plasma and other body fluids following proteolytic cleavage in the juxtamembrane stalk region. In terms of biological role, isoform produced by alternative promoter usage that is specifically expressed in spermatocytes and adult testis, and which is required for male fertility. In contrast to somatic isoforms, only contains one catalytic domain. Acts as a dipeptidyl carboxypeptidase that removes dipeptides from the C-terminus of substrates. The identity of substrates that are needed for male fertility is unknown. May also have a glycosidase activity which releases GPI-anchored proteins from the membrane by cleaving the mannose linkage in the GPI moiety. The GPIase activity was reported to be essential for the egg-binding ability of the sperm. This activity is however unclear and has been challenged by other groups, suggesting that it may be indirect. The protein is Angiotensin-converting enzyme of Pan troglodytes (Chimpanzee).